The sequence spans 109 residues: Phosphoribosyl-AMP cyclohydrolase (109 aa).

Asp80 provides a ligand contact to Mg(2+). Cys81 serves as a coordination point for Zn(2+). 2 residues coordinate Mg(2+): Asp82 and Asp84. Residues Cys97 and Cys104 each contribute to the Zn(2+) site.

Belongs to the PRA-CH family. Homodimer. Mg(2+) serves as cofactor. Requires Zn(2+) as cofactor.

Its subcellular location is the cytoplasm. It carries out the reaction 1-(5-phospho-beta-D-ribosyl)-5'-AMP + H2O = 1-(5-phospho-beta-D-ribosyl)-5-[(5-phospho-beta-D-ribosylamino)methylideneamino]imidazole-4-carboxamide. It participates in amino-acid biosynthesis; L-histidine biosynthesis; L-histidine from 5-phospho-alpha-D-ribose 1-diphosphate: step 3/9. In terms of biological role, catalyzes the hydrolysis of the adenine ring of phosphoribosyl-AMP. In Clostridium botulinum (strain Alaska E43 / Type E3), this protein is Phosphoribosyl-AMP cyclohydrolase.